The chain runs to 961 residues: DNA replication licensing factor MCM2 (961 aa).

The segment covering M1–F17 has biased composition (polar residues). Disordered stretches follow at residues M1–N81 and A120–E220. The span at S39 to F78 shows a compositional bias: acidic residues. 2 stretches are compositionally biased toward basic and acidic residues: residues A120 to Q146 and P166 to D176. A compositionally biased stretch (acidic residues) spans Q205 to E220. A C4-type zinc finger spans residues C380–C406. Residues I524 to V730 enclose the MCM domain. An ATP-binding site is contributed by G574–S581. Residues S706–D709 carry the Arginine finger motif.

It belongs to the MCM family. As to quaternary structure, component of the minichromosome maintenance (MCM) complex, a heterotetramer composed of MCM2, MCM3, MCM4, MCM5, MCM6 and MCM7. Interacts with CSN5. Widely expressed, with higher expression in developing tissues.

The protein localises to the nucleus. The catalysed reaction is ATP + H2O = ADP + phosphate + H(+). Probable component of the MCM2-7 complex (MCM complex) that may function as a DNA helicase and which is essential to undergo a single round of replication initiation and elongation per cell cycle in eukaryotic cells. Can complement the fission yeast mcm2 mutant. The polypeptide is DNA replication licensing factor MCM2 (Oryza sativa subsp. japonica (Rice)).